The primary structure comprises 229 residues: DNA mismatch repair protein MutH (229 aa).

It belongs to the MutH family.

It localises to the cytoplasm. In terms of biological role, sequence-specific endonuclease that cleaves unmethylated GATC sequences. It is involved in DNA mismatch repair. The sequence is that of DNA mismatch repair protein MutH from Escherichia coli (strain SMS-3-5 / SECEC).